A 39-amino-acid chain; its full sequence is Antimicrobial peptide CHP1 (39 aa).

3 disulfides stabilise this stretch: Cys-6–Cys-28, Cys-13–Cys-34, and Cys-18–Cys-35.

Bactericidal activity; inhibits S.aureus and E.coli. The polypeptide is Antimicrobial peptide CHP1 (Gallus gallus (Chicken)).